The sequence spans 156 residues: Transcription elongation factor GreA (156 aa).

The stretch at 12 to 72 (YKKLEDELST…KEIEHELKYA (61 aa)) forms a coiled coil.

It belongs to the GreA/GreB family.

In terms of biological role, necessary for efficient RNA polymerase transcription elongation past template-encoded arresting sites. The arresting sites in DNA have the property of trapping a certain fraction of elongating RNA polymerases that pass through, resulting in locked ternary complexes. Cleavage of the nascent transcript by cleavage factors such as GreA or GreB allows the resumption of elongation from the new 3'terminus. GreA releases sequences of 2 to 3 nucleotides. The protein is Transcription elongation factor GreA of Dehalococcoides mccartyi (strain ATCC BAA-2266 / KCTC 15142 / 195) (Dehalococcoides ethenogenes (strain 195)).